The following is a 642-amino-acid chain: Threonine--tRNA ligase (642 aa).

The region spanning 1-61 (MPVITLPDGS…ENDAQLSIIT (61 aa)) is the TGS domain. The segment at 243–534 (DHRKIGKQLD…LTEEFAGFFP (292 aa)) is catalytic. 3 residues coordinate Zn(2+): C334, H385, and H511.

The protein belongs to the class-II aminoacyl-tRNA synthetase family. Homodimer. Zn(2+) serves as cofactor.

Its subcellular location is the cytoplasm. The catalysed reaction is tRNA(Thr) + L-threonine + ATP = L-threonyl-tRNA(Thr) + AMP + diphosphate + H(+). In terms of biological role, catalyzes the attachment of threonine to tRNA(Thr) in a two-step reaction: L-threonine is first activated by ATP to form Thr-AMP and then transferred to the acceptor end of tRNA(Thr). Also edits incorrectly charged L-seryl-tRNA(Thr). In Enterobacter sp. (strain 638), this protein is Threonine--tRNA ligase.